The primary structure comprises 352 residues: Phosphoribosylformylglycinamidine cyclo-ligase (352 aa).

It belongs to the AIR synthase family.

It localises to the cytoplasm. It carries out the reaction 2-formamido-N(1)-(5-O-phospho-beta-D-ribosyl)acetamidine + ATP = 5-amino-1-(5-phospho-beta-D-ribosyl)imidazole + ADP + phosphate + H(+). The protein operates within purine metabolism; IMP biosynthesis via de novo pathway; 5-amino-1-(5-phospho-D-ribosyl)imidazole from N(2)-formyl-N(1)-(5-phospho-D-ribosyl)glycinamide: step 2/2. This is Phosphoribosylformylglycinamidine cyclo-ligase from Stenotrophomonas maltophilia (strain K279a).